The chain runs to 287 residues: UTP--glucose-1-phosphate uridylyltransferase 1 (287 aa).

It belongs to the UDPGP type 2 family.

It carries out the reaction alpha-D-glucose 1-phosphate + UTP + H(+) = UDP-alpha-D-glucose + diphosphate. The protein operates within glycolipid metabolism; diglucosyl-diacylglycerol biosynthesis. In terms of biological role, catalyzes the formation of UDP-glucose from glucose-1-phosphate and UTP. This is an intermediate step in the biosynthesis of diglucosyl-diacylglycerol (Glc2-DAG), i.e. a glycolipid found in the membrane, which is also used as a membrane anchor for lipoteichoic acid (LTA). This chain is UTP--glucose-1-phosphate uridylyltransferase 1 (gtaB1), found in Staphylococcus saprophyticus subsp. saprophyticus (strain ATCC 15305 / DSM 20229 / NCIMB 8711 / NCTC 7292 / S-41).